A 797-amino-acid chain; its full sequence is Protocadherin-3 (797 aa).

An N-terminal signal peptide occupies residues 1-30 (METALAKIPQQRQVFFLTILSLLWKSSSEA). The Extracellular segment spans residues 31-691 (IRYSMPEETE…DNYDVLTLYL (661 aa)). 5 Cadherin domains span residues 35–133 (MPEE…SPEF), 138–242 (MLLT…SPQF), 247–346 (YKVQ…APEL), 351–450 (LTVL…APAF), and 455–560 (YTMF…APFV). Asn169, Asn276, and Asn417 each carry an N-linked (GlcNAc...) asparagine glycan. N-linked (GlcNAc...) asparagine glycosylation occurs at Asn566. One can recognise a Cadherin 6 domain in the interval 567 to 670 (ASAPCTELLP…VVDGFSQPYL (104 aa)). A helical membrane pass occupies residues 692–712 (VIALASVSSLFLLSVVLFVGV). Residues 713-797 (RLCRRAREAS…AVVHNSVGFY (85 aa)) are Cytoplasmic-facing.

In terms of tissue distribution, expressed in brain.

Its subcellular location is the cell membrane. Potential calcium-dependent cell-adhesion protein. May be involved in the establishment and maintenance of specific neuronal connections in the brain. The sequence is that of Protocadherin-3 (Pcdh3) from Rattus norvegicus (Rat).